A 173-amino-acid chain; its full sequence is NADH-ubiquinone oxidoreductase chain 6 (173 aa).

4 helical membrane passes run 24–44, 47–67, 81–101, and 142–162; these read AMGLMLLIQTFLTSLLTGMFV, FWFSYVLFLIFMGGMLVLFIY, MKLFFLSLSMILMFIVFSFFF, and LITLLLINYLFLTLLVTVKIT.

Belongs to the complex I subunit 6 family.

The protein localises to the mitochondrion membrane. The catalysed reaction is a ubiquinone + NADH + 5 H(+)(in) = a ubiquinol + NAD(+) + 4 H(+)(out). Core subunit of the mitochondrial membrane respiratory chain NADH dehydrogenase (Complex I) that is believed to belong to the minimal assembly required for catalysis. Complex I functions in the transfer of electrons from NADH to the respiratory chain. The immediate electron acceptor for the enzyme is believed to be ubiquinone. This is NADH-ubiquinone oxidoreductase chain 6 from Aedes aegypti (Yellowfever mosquito).